The chain runs to 166 residues: Ribosome maturation factor RimP (166 aa).

It belongs to the RimP family.

The protein localises to the cytoplasm. Required for maturation of 30S ribosomal subunits. This is Ribosome maturation factor RimP from Psychrobacter cryohalolentis (strain ATCC BAA-1226 / DSM 17306 / VKM B-2378 / K5).